The primary structure comprises 185 residues: NADH-ubiquinone oxidoreductase chain 6 (185 aa).

5 consecutive transmembrane segments (helical) span residues 3-23 (SLFM…ISTP), 28-48 (SVFW…SLGL), 54-74 (IFII…IMLI), 87-107 (HFLP…TNSP), and 134-154 (ELVL…ILLA).

Belongs to the complex I subunit 6 family.

Its subcellular location is the mitochondrion membrane. It carries out the reaction a ubiquinone + NADH + 5 H(+)(in) = a ubiquinol + NAD(+) + 4 H(+)(out). Core subunit of the mitochondrial membrane respiratory chain NADH dehydrogenase (Complex I) that is believed to belong to the minimal assembly required for catalysis. Complex I functions in the transfer of electrons from NADH to the respiratory chain. The immediate electron acceptor for the enzyme is believed to be ubiquinone. This Sarcophyton glaucum (Toadstool umbrella leather coral) protein is NADH-ubiquinone oxidoreductase chain 6 (ND6).